We begin with the raw amino-acid sequence, 23 residues long: Hongotoxin-4 (23 aa).

Belongs to the short scorpion toxin superfamily. Potassium channel inhibitor family. Alpha-KTx 02 subfamily. As to expression, expressed by the venom gland.

The protein localises to the secreted. In terms of biological role, potent selective inhibitor of Kv1/KCNA voltage-gated potassium channels. The polypeptide is Hongotoxin-4 (Centruroides limbatus (Bark scorpion)).